The chain runs to 90 residues: SAGA-associated factor 11 (90 aa).

The SGF11-type zinc finger occupies 63-84 (FSCDNCGRKIAGGRFAQHINKC).

Belongs to the SGF11 family. As to quaternary structure, component of the 1.8 MDa SAGA transcription coactivator-HAT complex. SAGA is built of 5 distinct domains with specialized functions. Within the SAGA complex, SUS1, SGF11, SGF73 and UBP8 form an additional subcomplex of SAGA called the DUB module (deubiquitination module). Interacts directly with SGF73, SUS1 and UBP8.

Its subcellular location is the nucleus. Functions as a component of the transcription regulatory histone acetylation (HAT) complex SAGA. At the promoters, SAGA is required for recruitment of the basal transcription machinery. It influences RNA polymerase II transcriptional activity through different activities such as TBP interaction and promoter selectivity, interaction with transcription activators, and chromatin modification through histone acetylation and deubiquitination. SAGA acetylates nucleosomal histone H3 to some extent (to form H3K9ac, H3K14ac, H3K18ac and H3K23ac). SAGA interacts with DNA via upstream activating sequences (UASs). Involved in transcriptional regulation of a subset of SAGA-regulated genes. Within the SAGA complex, participates in a subcomplex, that specifically deubiquitinates histones H2B. The sequence is that of SAGA-associated factor 11 from Lodderomyces elongisporus (strain ATCC 11503 / CBS 2605 / JCM 1781 / NBRC 1676 / NRRL YB-4239) (Yeast).